The sequence spans 224 residues: Non-structural protein V (224 aa).

Positions 54 to 65 are enriched in polar residues; it reads QKNIQHPTASHQ. 2 disordered regions span residues 54–96 and 150–171; these read QKNI…DPEP and TEFK…GGHR. Residues His170, Cys189, Cys193, Cys205, Cys207, Cys210, Cys214, and Cys217 each contribute to the Zn(2+) site.

It belongs to the paramyxoviruses V protein family. As to quaternary structure, interacts with host IFIH1/MDA5 and DHX58/LGP2. Forms with host DDB1, CUL4A, STAT1, STAT2 and STAT3 the mumps virus V-dependent complex (VDC).

The protein resides in the virion. It is found in the host cytoplasm. Functionally, plays an essential role in the inhibition of host immune response. Prevents the establishment of cellular antiviral state by blocking interferon-alpha/beta (IFN-alpha/beta) production and signaling pathway. Interacts with host IFIH1/MDA5 and DHX58/LGP2 to inhibit the transduction pathway involved in the activation of IFN-beta promoter, thus protecting the virus against cell antiviral state. Blocks the type I and II interferon signaling pathways by interacting with host STAT1, STAT2 and STAT3, and mediating their ubiquitination and subsequent proteasomal degradation. The polypeptide is Non-structural protein V (Mumps virus (strain SBL) (MuV)).